The following is a 343-amino-acid chain: Protein RecA (343 aa).

Residue 66–73 (GPESSGKT) participates in ATP binding.

Belongs to the RecA family.

It localises to the cytoplasm. Can catalyze the hydrolysis of ATP in the presence of single-stranded DNA, the ATP-dependent uptake of single-stranded DNA by duplex DNA, and the ATP-dependent hybridization of homologous single-stranded DNAs. It interacts with LexA causing its activation and leading to its autocatalytic cleavage. In Nitrosomonas eutropha (strain DSM 101675 / C91 / Nm57), this protein is Protein RecA.